The sequence spans 266 residues: Undecaprenyl-diphosphatase (266 aa).

7 helical membrane-spanning segments follow: residues 39 to 59 (PGSS…VWYF), 86 to 106 (SIFI…LFVP), 112 to 132 (VLRS…FMYL), 153 to 173 (LIGF…GITI), 189 to 209 (FSFL…FIFS), 216 to 236 (IGFL…LLAI), and 246 to 266 (NGLK…LLNL).

This sequence belongs to the UppP family.

It is found in the cell inner membrane. The enzyme catalyses di-trans,octa-cis-undecaprenyl diphosphate + H2O = di-trans,octa-cis-undecaprenyl phosphate + phosphate + H(+). Its function is as follows. Catalyzes the dephosphorylation of undecaprenyl diphosphate (UPP). Confers resistance to bacitracin. In Prochlorococcus marinus (strain MIT 9215), this protein is Undecaprenyl-diphosphatase.